Reading from the N-terminus, the 319-residue chain is Ferrochelatase (319 aa).

Residues His193 and Glu274 each contribute to the Fe cation site.

This sequence belongs to the ferrochelatase family.

It is found in the cytoplasm. The enzyme catalyses heme b + 2 H(+) = protoporphyrin IX + Fe(2+). The protein operates within porphyrin-containing compound metabolism; protoheme biosynthesis; protoheme from protoporphyrin-IX: step 1/1. Functionally, catalyzes the ferrous insertion into protoporphyrin IX. In Actinobacillus pleuropneumoniae serotype 3 (strain JL03), this protein is Ferrochelatase.